The sequence spans 543 residues: CTP synthase (543 aa).

An amidoligase domain region spans residues 1 to 265 (MARYIFITGG…DDEVLAAFGI (265 aa)). Ser13 is a binding site for CTP. Ser13 is a UTP binding site. 14-19 (SLGKGL) serves as a coordination point for ATP. Tyr54 serves as a coordination point for L-glutamine. Position 71 (Asp71) interacts with ATP. Positions 71 and 139 each coordinate Mg(2+). CTP contacts are provided by residues 146-148 (DIE), 186-191 (KTKPTQ), and Lys222. Residues 186–191 (KTKPTQ) and Lys222 each bind UTP. 238–240 (RDA) lines the ATP pocket. Residues 291 to 542 (TIAIVGKYTG…IQAAVVQSRL (252 aa)) form the Glutamine amidotransferase type-1 domain. Position 353 (Gly353) interacts with L-glutamine. The Nucleophile; for glutamine hydrolysis role is filled by Cys380. Residues 381–384 (FGMQ), Glu404, and Arg470 contribute to the L-glutamine site. Catalysis depends on residues His515 and Glu517.

It belongs to the CTP synthase family. Homotetramer.

The enzyme catalyses UTP + L-glutamine + ATP + H2O = CTP + L-glutamate + ADP + phosphate + 2 H(+). It catalyses the reaction L-glutamine + H2O = L-glutamate + NH4(+). The catalysed reaction is UTP + NH4(+) + ATP = CTP + ADP + phosphate + 2 H(+). The protein operates within pyrimidine metabolism; CTP biosynthesis via de novo pathway; CTP from UDP: step 2/2. With respect to regulation, allosterically activated by GTP, when glutamine is the substrate; GTP has no effect on the reaction when ammonia is the substrate. The allosteric effector GTP functions by stabilizing the protein conformation that binds the tetrahedral intermediate(s) formed during glutamine hydrolysis. Inhibited by the product CTP, via allosteric rather than competitive inhibition. In terms of biological role, catalyzes the ATP-dependent amination of UTP to CTP with either L-glutamine or ammonia as the source of nitrogen. Regulates intracellular CTP levels through interactions with the four ribonucleotide triphosphates. This is CTP synthase from Nitrobacter winogradskyi (strain ATCC 25391 / DSM 10237 / CIP 104748 / NCIMB 11846 / Nb-255).